Reading from the N-terminus, the 971-residue chain is Unconventional myosin-XIX (971 aa).

Residues 1 to 25 (MSRPLSKNTEREPKQINGHQNNLSN) form a disordered region. One can recognise a Myosin motor domain in the interval 48–755 (HLYDDLTKVN…MVELLEERRL (708 aa)). An ATP-binding site is contributed by 145–152 (GESGAGKT). The actin-binding stretch occupies residues 611 to 633 (LESLMQILHSTTPHYIRCIKPNV). IQ domains follow at residues 758–787 (ISSKAMCIQCCWRSYRQRKLAKQSKAATTI) and 780–809 (QSKAATTIQAAVKGWLTKKYIKRMHSAATV). Residues 826–971 (AAELDDSTED…FNEILLEKTV (146 aa)) are myMOMA region.

It belongs to the TRAFAC class myosin-kinesin ATPase superfamily. Myosin family. Myosin is a hexamer of 2 heavy chains and 4 light chains.

Its subcellular location is the mitochondrion outer membrane. It localises to the cytoplasm. The protein resides in the cytoskeleton. Its function is as follows. Actin-based motor molecule with ATPase activity that localizes to the mitochondrion outer membrane. Motor protein that moves towards the plus-end of actin filaments. Required for mitochondrial inheritance during mitosis. May be involved in mitochondrial transport or positioning. This is Unconventional myosin-XIX from Xenopus laevis (African clawed frog).